The following is a 171-amino-acid chain: Crossover junction endodeoxyribonuclease RuvC (171 aa).

Catalysis depends on residues Asp-7, Glu-66, and Asp-138. Positions 7, 66, and 138 each coordinate Mg(2+).

The protein belongs to the RuvC family. As to quaternary structure, homodimer which binds Holliday junction (HJ) DNA. The HJ becomes 2-fold symmetrical on binding to RuvC with unstacked arms; it has a different conformation from HJ DNA in complex with RuvA. In the full resolvosome a probable DNA-RuvA(4)-RuvB(12)-RuvC(2) complex forms which resolves the HJ. Mg(2+) is required as a cofactor.

It is found in the cytoplasm. The enzyme catalyses Endonucleolytic cleavage at a junction such as a reciprocal single-stranded crossover between two homologous DNA duplexes (Holliday junction).. The RuvA-RuvB-RuvC complex processes Holliday junction (HJ) DNA during genetic recombination and DNA repair. Endonuclease that resolves HJ intermediates. Cleaves cruciform DNA by making single-stranded nicks across the HJ at symmetrical positions within the homologous arms, yielding a 5'-phosphate and a 3'-hydroxyl group; requires a central core of homology in the junction. The consensus cleavage sequence is 5'-(A/T)TT(C/G)-3'. Cleavage occurs on the 3'-side of the TT dinucleotide at the point of strand exchange. HJ branch migration catalyzed by RuvA-RuvB allows RuvC to scan DNA until it finds its consensus sequence, where it cleaves and resolves the cruciform DNA. This is Crossover junction endodeoxyribonuclease RuvC from Francisella tularensis subsp. mediasiatica (strain FSC147).